A 702-amino-acid polypeptide reads, in one-letter code: Methionine--tRNA ligase (702 aa).

The 'HIGH' region motif lies at 14–24 (PYANGPVHLGH). Zn(2+) contacts are provided by Cys-146, Cys-149, Cys-159, and Cys-162. Positions 344 to 348 (KFSKS) match the 'KMSKS' region motif. An ATP-binding site is contributed by Lys-347. Residues 601–702 (EFLKVDLRVA…GKEINGKKIQ (102 aa)) enclose the tRNA-binding domain.

The protein belongs to the class-I aminoacyl-tRNA synthetase family. MetG type 1 subfamily. As to quaternary structure, homodimer. The cofactor is Zn(2+).

Its subcellular location is the cytoplasm. It catalyses the reaction tRNA(Met) + L-methionine + ATP = L-methionyl-tRNA(Met) + AMP + diphosphate. Functionally, is required not only for elongation of protein synthesis but also for the initiation of all mRNA translation through initiator tRNA(fMet) aminoacylation. This chain is Methionine--tRNA ligase, found in Chlorobium phaeobacteroides (strain DSM 266 / SMG 266 / 2430).